The chain runs to 409 residues: tRNA-specific 2-thiouridylase MnmA (409 aa).

ATP is bound by residues 43-50 (AMSGGVDS) and Leu-69. The Nucleophile role is filled by Cys-137. Cys-137 and Cys-235 are oxidised to a cystine. Gly-161 serves as a coordination point for ATP. Positions 185 to 187 (KDQ) are interaction with tRNA. Cys-235 (cysteine persulfide intermediate) is an active-site residue.

It belongs to the MnmA/TRMU family.

Its subcellular location is the cytoplasm. It carries out the reaction S-sulfanyl-L-cysteinyl-[protein] + uridine(34) in tRNA + AH2 + ATP = 2-thiouridine(34) in tRNA + L-cysteinyl-[protein] + A + AMP + diphosphate + H(+). In terms of biological role, catalyzes the 2-thiolation of uridine at the wobble position (U34) of tRNA, leading to the formation of s(2)U34. In Caulobacter sp. (strain K31), this protein is tRNA-specific 2-thiouridylase MnmA.